Consider the following 171-residue polypeptide: AN1-type zinc finger protein 2A (171 aa).

2 AN1-type zinc fingers span residues Pro4 to Val52 and Lys94 to Ser142. Zn(2+) contacts are provided by Cys10, Cys15, Cys25, Cys28, Cys33, His36, His42, Cys44, Cys100, Cys105, Cys115, Cys118, Cys123, His126, His132, and Cys134. Positions Gln135–Lys171 are disordered. The segment covering Ala136 to Ala151 has biased composition (low complexity).

The protein localises to the cytoplasm. It localises to the nucleus. The polypeptide is AN1-type zinc finger protein 2A (Zfand2a) (Rattus norvegicus (Rat)).